The following is a 282-amino-acid chain: Homeobox-leucine zipper protein HAT1 (282 aa).

A disordered region spans residues 71–134 (LEEETGVSSP…EEDYGGETCR (64 aa)). The span at 76–89 (GVSSPNSTISSTVS) shows a compositional bias: low complexity. The segment at residues 132–191 (TCRKKLRLSKDQSAVLEDTFKEHNTLNPKQKLALAKKLGLTARQVEVWFQNRRARTKLKQ) is a DNA-binding region (homeobox). A leucine-zipper region spans residues 199-220 (LKRCVEKLTEENRRLEKEAAEL).

Belongs to the HD-ZIP homeobox family. Class II subfamily. Interacts with BZIP30.

It is found in the nucleus. Functionally, probable transcription factor. The sequence is that of Homeobox-leucine zipper protein HAT1 (HAT1) from Arabidopsis thaliana (Mouse-ear cress).